A 324-amino-acid chain; its full sequence is MSRPSSTGPSANKPCSKQPPPQPQHTPSPAAPPAAATISAAGPGSSAVPAAAAVISGPGGGGGAGPVSPQHHELTSLFECPVCFDYVLPPILQCQAGHLVCNQCRQKLSCCPTCRGALTPSIRNLAMEKVASAVLFPCKYATTGCSLTLHHTEKPEHEDICEYRPYSCPCPGASCKWQGSLEAVMSHLMHAHKSITTLQGEDIVFLATDINLPGAVDWVMMQSCFGHHFMLVLEKQEKYEGHQQFFAIVLLIGTRKQAENFAYRLELNGNRRRLTWEATPRSIHDGVAAAIMNSDCLVFDTAIAHLFADNGNLGINVTISTCCP.

Positions 1–15 (MSRPSSTGPSANKPC) are enriched in polar residues. The tract at residues 1 to 42 (MSRPSSTGPSANKPCSKQPPPQPQHTPSPAAPPAAATISAAG) is disordered. Phosphoserine is present on serine 6. The residue at position 16 (serine 16) is a Phosphoserine; by DYRK2. Residues 17–32 (KQPPPQPQHTPSPAAP) are compositionally biased toward pro residues. Threonine 26 carries the post-translational modification Phosphothreonine; by DYRK2. Serine 28 is subject to Phosphoserine; by DYRK2 and MAPK14. Low complexity predominate over residues 33-42 (PAAATISAAG). Phosphoserine; by DYRK2 is present on serine 68. An RING-type zinc finger spans residues 80–115 (CPVCFDYVLPPILQCQAGHLVCNQCRQKLSCCPTCR). Residue threonine 119 is modified to Phosphothreonine; by DYRK2. The tract at residues 130-322 (VASAVLFPCK…LGINVTISTC (193 aa)) is SBD. Residues 133-193 (AVLFPCKYAT…VMSHLMHAHK (61 aa)) form an SIAH-type zinc finger. Zn(2+)-binding residues include cysteine 138, cysteine 145, histidine 157, cysteine 161, cysteine 168, cysteine 175, histidine 187, and histidine 192.

Belongs to the SINA (Seven in absentia) family. Homodimer. Interacts with UBE2E2. Interacts with PEG3. Interacts with VAV1, without mediating its ubiquitin-mediated degradation. Interacts with CACYBP/SIP. Probable component of some large E3 complex possibly composed of UBE2D1, SIAH2, CACYBP/SIP, SKP1, APC and TBL1X. Interacts with PEG10, which may inhibit its activity. Interacts with EGLN2 and SNCAIP. Interacts with DYRK2. Interacts with NR1D1 and NR1D2. Interacts with DCC. Interacts with AXIN1. Phosphorylated at Ser-28 by MAPK14, which mediates the degradation by the proteasome of EGLN3. Phosphorylated at Ser-28 by DYRK2; this increases the ubiquitin ligase activity and promotes degradation of EGLN3. Widely expressed at low level.

The protein localises to the cytoplasm. It is found in the nucleus. It catalyses the reaction S-ubiquitinyl-[E2 ubiquitin-conjugating enzyme]-L-cysteine + [acceptor protein]-L-lysine = [E2 ubiquitin-conjugating enzyme]-L-cysteine + N(6)-ubiquitinyl-[acceptor protein]-L-lysine.. Its pathway is protein modification; protein ubiquitination. Its activity is regulated as follows. Inhibited by interaction with SNCAIP (isoform 2, but not isoform 1). May be inhibited by interaction with PEG10. Its function is as follows. E3 ubiquitin-protein ligase that mediates ubiquitination and subsequent proteasomal degradation of target proteins. E3 ubiquitin ligases accept ubiquitin from an E2 ubiquitin-conjugating enzyme in the form of a thioester and then directly transfers the ubiquitin to targeted substrates. Mediates E3 ubiquitin ligase activity either through direct binding to substrates or by functioning as the essential RING domain subunit of larger E3 complexes. Triggers the ubiquitin-mediated degradation of many substrates, including proteins involved in transcription regulation (GPS2, POU2AF1, PML, NCOR1), a cell surface receptor (DCC), an antiapoptotic protein (BAG1), and a protein involved in synaptic vesicle function in neurons (SYP). Mediates ubiquitination and proteasomal degradation of DYRK2 in response to hypoxia. It is thereby involved in apoptosis, tumor suppression, cell cycle, transcription and signaling processes. Has some overlapping function with SIAH1. Triggers the ubiquitin-mediated degradation of TRAF2, whereas SIAH1 does not. Promotes monoubiquitination of SNCA. Regulates cellular clock function via ubiquitination of the circadian transcriptional repressors NR1D1 and NR1D2 leading to their proteasomal degradation. Plays an important role in mediating the rhythmic degradation/clearance of NR1D1 and NR1D2 contributing to their circadian profile of protein abundance. Mediates ubiquitination and degradation of EGLN2 and EGLN3 in response to the unfolded protein response (UPR), leading to their degradation and subsequent stabilization of ATF4. Also part of the Wnt signaling pathway in which it mediates the Wnt-induced ubiquitin-mediated proteasomal degradation of AXIN1. This is E3 ubiquitin-protein ligase SIAH2 (SIAH2) from Homo sapiens (Human).